A 734-amino-acid polypeptide reads, in one-letter code: Photosystem I P700 chlorophyll a apoprotein A2 (734 aa).

The next 8 helical transmembrane spans lie at 46 to 69 (IFAS…FHVA), 135 to 158 (LYTG…LHLQ), 175 to 199 (LNHH…HVAI), 273 to 291 (IAHH…GHMY), 330 to 353 (IHFQ…QHMY), 369 to 395 (AALY…IFFI), 417 to 439 (AIKS…LYVH), and 517 to 535 (FLVH…LILV). [4Fe-4S] cluster contacts are provided by C559 and C568. 2 consecutive transmembrane segments (helical) span residues 575–596 (AFYL…YWHW) and 643–665 (LSVW…MFLI). Chlorophyll a-binding residues include H654, M662, and Y670. W671 provides a ligand contact to phylloquinone. A helical transmembrane segment spans residues 707–727 (LVGLAHFSVGYIFTYAAFLIA).

The protein belongs to the PsaA/PsaB family. In terms of assembly, the PsaA/B heterodimer binds the P700 chlorophyll special pair and subsequent electron acceptors. PSI consists of a core antenna complex that captures photons, and an electron transfer chain that converts photonic excitation into a charge separation. The eukaryotic PSI reaction center is composed of at least 11 subunits. P700 is a chlorophyll a/chlorophyll a' dimer, A0 is one or more chlorophyll a, A1 is one or both phylloquinones and FX is a shared 4Fe-4S iron-sulfur center. is required as a cofactor.

The protein localises to the plastid. The protein resides in the chloroplast thylakoid membrane. The catalysed reaction is reduced [plastocyanin] + hnu + oxidized [2Fe-2S]-[ferredoxin] = oxidized [plastocyanin] + reduced [2Fe-2S]-[ferredoxin]. PsaA and PsaB bind P700, the primary electron donor of photosystem I (PSI), as well as the electron acceptors A0, A1 and FX. PSI is a plastocyanin-ferredoxin oxidoreductase, converting photonic excitation into a charge separation, which transfers an electron from the donor P700 chlorophyll pair to the spectroscopically characterized acceptors A0, A1, FX, FA and FB in turn. Oxidized P700 is reduced on the lumenal side of the thylakoid membrane by plastocyanin. The protein is Photosystem I P700 chlorophyll a apoprotein A2 of Liriodendron tulipifera (Tuliptree).